The following is a 95-amino-acid chain: Small ribosomal subunit protein bS6 (95 aa).

It belongs to the bacterial ribosomal protein bS6 family.

Functionally, binds together with bS18 to 16S ribosomal RNA. This is Small ribosomal subunit protein bS6 from Bacillus pumilus (strain SAFR-032).